A 145-amino-acid chain; its full sequence is Large ribosomal subunit protein uL13 (145 aa).

The protein belongs to the universal ribosomal protein uL13 family. As to quaternary structure, part of the 50S ribosomal subunit.

In terms of biological role, this protein is one of the early assembly proteins of the 50S ribosomal subunit, although it is not seen to bind rRNA by itself. It is important during the early stages of 50S assembly. This is Large ribosomal subunit protein uL13 from Haloquadratum walsbyi (strain DSM 16790 / HBSQ001).